The sequence spans 183 residues: Ubiquitin-conjugating enzyme E2 6 (183 aa).

Positions 1–148 (MASPSKRREM…VKEYCEKYAK (148 aa)) constitute a UBC core domain. Cys-85 (glycyl thioester intermediate) is an active-site residue. Positions 148-183 (KPEEILSDDDDDDSMSEDGSDSDDDDDDEIVGKADP) are disordered. Over residues 152–176 (ILSDDDDDDSMSEDGSDSDDDDDDE) the composition is skewed to acidic residues.

The protein belongs to the ubiquitin-conjugating enzyme family. As to expression, expressed in roots, petals, sepals and silique walls.

It carries out the reaction S-ubiquitinyl-[E1 ubiquitin-activating enzyme]-L-cysteine + [E2 ubiquitin-conjugating enzyme]-L-cysteine = [E1 ubiquitin-activating enzyme]-L-cysteine + S-ubiquitinyl-[E2 ubiquitin-conjugating enzyme]-L-cysteine.. It functions in the pathway protein modification; protein ubiquitination. Functionally, accepts the ubiquitin from the E1 complex and catalyzes its covalent attachment to other proteins. This chain is Ubiquitin-conjugating enzyme E2 6 (UBC6), found in Arabidopsis thaliana (Mouse-ear cress).